The following is a 162-amino-acid chain: Caveolin-2 (162 aa).

Residues 1–86 (MGLETEKADV…FEMSKYVIYK (86 aa)) lie on the Cytoplasmic side of the membrane. The residue at position 19 (Y19) is a Phosphotyrosine; by SRC. Phosphoserine occurs at positions 20 and 23. Position 27 is a phosphotyrosine; by SRC (Y27). The helical intramembrane region spans 87 to 107 (FLTVFLAIPLAFAAGILFATL). Topologically, residues 108 to 162 (SCLHIWIIMPFVKTCLMVLPSVQTIWKSVTDVVIAPLCTSVGRSFSSVSLQLSHD) are cytoplasmic.

This sequence belongs to the caveolin family. In terms of assembly, monomer or homodimer. Interacts with CAV1; the interaction forms a stable heterooligomeric complex that is required for targeting to lipid rafts and for caveolae formation. Tyrosine phosphorylated forms do not form heterooligomers with the Tyr-19-phosphorylated form existing as a monomer or dimer, and the Tyr-27-form as a monomer only. Interacts (tyrosine phosphorylated form) with the SH2 domain-containing proteins, RASA1, NCK1 and SRC. Interacts (tyrosine phosphorylated form) with INSR, the interaction (Tyr-27-phosphorylated form) is increased on insulin stimulation. Interacts (Tyr-19 phosphorylated form) with MAPK1 (phosphorylated form); the interaction, promoted by insulin, leads to nuclear location and MAPK1 activation. Interacts with STAT3; the interaction is increased on insulin-induced tyrosine phosphorylation leading to STAT activation. Post-translationally, phosphorylated on serine and tyrosine residues. CAV1 promotes phosphorylation on Ser-23 which then targets the complex to the plasma membrane, lipid rafts and caveolae. Phosphorylation on both Tyr-19 and Tyr-27 is required for insulin-induced 'Ser-727' phosphorylation of STAT3 and its activation. Phosphorylation on Tyr-19 is required for insulin-induced phosphorylation of MAPK1 and DNA binding of STAT3. Tyrosine phosphorylation is induced by both EGF and insulin.

It localises to the nucleus. It is found in the cytoplasm. The protein localises to the golgi apparatus membrane. Its subcellular location is the cell membrane. The protein resides in the membrane. It localises to the caveola. Functionally, may act as a scaffolding protein within caveolar membranes. Interacts directly with G-protein alpha subunits and can functionally regulate their activity. Acts as an accessory protein in conjunction with CAV1 in targeting to lipid rafts and driving caveolae formation. Positive regulator of cellular mitogenesis of the MAPK signaling pathway. Required for the insulin-stimulated nuclear translocation and activation of MAPK1 and STAT3, and the subsequent regulation of cell cycle progression. The protein is Caveolin-2 (CAV2) of Muntiacus muntjak (Barking deer).